A 150-amino-acid chain; its full sequence is Ribonuclease H (150 aa).

The region spanning Asp3 to Asp144 is the RNase H type-1 domain. Mg(2+) contacts are provided by Asp12, Glu50, Asp72, and Asp136. Residues Asp129–Lys150 are disordered.

It belongs to the RNase H family. As to quaternary structure, monomer. It depends on Mg(2+) as a cofactor.

The protein localises to the cytoplasm. The enzyme catalyses Endonucleolytic cleavage to 5'-phosphomonoester.. In terms of biological role, endonuclease that specifically degrades the RNA of RNA-DNA hybrids. In Hyphomonas neptunium (strain ATCC 15444), this protein is Ribonuclease H.